A 438-amino-acid chain; its full sequence is Glutaryl-CoA dehydrogenase, mitochondrial (438 aa).

The N-terminal 44 residues, 1–44 (MALRGVYAQLLNRGPGLRVFRSWSSATAQTEKGEKTQSRSAKPS), are a transit peptide targeting the mitochondrion. Residues 138–139 (RS) and Ser-186 each bind substrate. FAD-binding positions include 177-186 (FGLTEPNHGS), Ser-186, and 212-214 (WIT). Lys-240 is modified (N6-acetyllysine). Residue 287-294 (FGCLNNAR) coordinates substrate. Residues Arg-319, Gln-330, and 387–391 (DMLGG) contribute to the FAD site. Catalysis depends on Glu-414, which acts as the Proton acceptor. Gly-415 serves as a coordination point for substrate. Residues Thr-416, 416–418 (THD), and Phe-434 contribute to the FAD site.

The protein belongs to the acyl-CoA dehydrogenase family. In terms of assembly, homotetramer. Requires FAD as cofactor.

Its subcellular location is the mitochondrion matrix. The catalysed reaction is glutaryl-CoA + oxidized [electron-transfer flavoprotein] + 2 H(+) = (2E)-butenoyl-CoA + reduced [electron-transfer flavoprotein] + CO2. Its pathway is amino-acid metabolism; lysine degradation. It participates in amino-acid metabolism; tryptophan metabolism. In terms of biological role, catalyzes the oxidative decarboxylation of glutaryl-CoA to crotonyl-CoA and CO(2) in the degradative pathway of L-lysine, L-hydroxylysine, and L-tryptophan metabolism. It uses electron transfer flavoprotein as its electron acceptor. The sequence is that of Glutaryl-CoA dehydrogenase, mitochondrial (GCDH) from Bos taurus (Bovine).